A 264-amino-acid chain; its full sequence is Thymidylate synthase (264 aa).

DUMP is bound at residue Arg21. Position 51 (His51) interacts with (6R)-5,10-methylene-5,6,7,8-tetrahydrofolate. 126–127 (RR) provides a ligand contact to dUMP. Catalysis depends on Cys146, which acts as the Nucleophile. Residues 166–169 (RSAD), Asn177, and 207–209 (HIY) each bind dUMP. Asp169 contributes to the (6R)-5,10-methylene-5,6,7,8-tetrahydrofolate binding site. Residue Ala263 participates in (6R)-5,10-methylene-5,6,7,8-tetrahydrofolate binding.

It belongs to the thymidylate synthase family. Bacterial-type ThyA subfamily. Homodimer.

Its subcellular location is the cytoplasm. It catalyses the reaction dUMP + (6R)-5,10-methylene-5,6,7,8-tetrahydrofolate = 7,8-dihydrofolate + dTMP. It functions in the pathway pyrimidine metabolism; dTTP biosynthesis. Functionally, catalyzes the reductive methylation of 2'-deoxyuridine-5'-monophosphate (dUMP) to 2'-deoxythymidine-5'-monophosphate (dTMP) while utilizing 5,10-methylenetetrahydrofolate (mTHF) as the methyl donor and reductant in the reaction, yielding dihydrofolate (DHF) as a by-product. This enzymatic reaction provides an intracellular de novo source of dTMP, an essential precursor for DNA biosynthesis. The chain is Thymidylate synthase from Rhizobium meliloti (strain 1021) (Ensifer meliloti).